We begin with the raw amino-acid sequence, 376 residues long: uncharacterized protein (376 aa).

This sequence belongs to the YCR102c/YLR460c/YNL134c family.

This is an uncharacterized protein from Saccharomyces cerevisiae (strain ATCC 204508 / S288c) (Baker's yeast).